The sequence spans 142 residues: RNA-directed DNA polymerase homolog (142 aa).

The protein resides in the mitochondrion. It carries out the reaction RNA(n) + a ribonucleoside 5'-triphosphate = RNA(n+1) + diphosphate. This Oenothera berteroana (Bertero's evening primrose) protein is RNA-directed DNA polymerase homolog.